Here is a 442-residue protein sequence, read N- to C-terminus: Proline--tRNA ligase (442 aa).

Belongs to the class-II aminoacyl-tRNA synthetase family. ProS type 2 subfamily. In terms of assembly, homodimer.

Its subcellular location is the cytoplasm. The enzyme catalyses tRNA(Pro) + L-proline + ATP = L-prolyl-tRNA(Pro) + AMP + diphosphate. In terms of biological role, catalyzes the attachment of proline to tRNA(Pro) in a two-step reaction: proline is first activated by ATP to form Pro-AMP and then transferred to the acceptor end of tRNA(Pro). This is Proline--tRNA ligase from Chelativorans sp. (strain BNC1).